The chain runs to 167 residues: 2-amino-4-hydroxy-6-hydroxymethyldihydropteridine pyrophosphokinase (167 aa).

It belongs to the HPPK family.

It carries out the reaction 6-hydroxymethyl-7,8-dihydropterin + ATP = (7,8-dihydropterin-6-yl)methyl diphosphate + AMP + H(+). Its pathway is cofactor biosynthesis; tetrahydrofolate biosynthesis; 2-amino-4-hydroxy-6-hydroxymethyl-7,8-dihydropteridine diphosphate from 7,8-dihydroneopterin triphosphate: step 4/4. In terms of biological role, catalyzes the transfer of pyrophosphate from adenosine triphosphate (ATP) to 6-hydroxymethyl-7,8-dihydropterin, an enzymatic step in folate biosynthesis pathway. The polypeptide is 2-amino-4-hydroxy-6-hydroxymethyldihydropteridine pyrophosphokinase (folK) (Bacillus subtilis (strain 168)).